Consider the following 325-residue polypeptide: Elongation factor P--(R)-beta-lysine ligase (325 aa).

Residue 76–78 (SPE) coordinates substrate. Residues 100–102 (RNE) and Asn109 contribute to the ATP site. Position 118 (Tyr118) interacts with substrate. Residue 244 to 245 (EL) coordinates ATP. Residue Glu251 participates in substrate binding. Residue Gly300 participates in ATP binding.

This sequence belongs to the class-II aminoacyl-tRNA synthetase family. EpmA subfamily. Homodimer.

It catalyses the reaction D-beta-lysine + L-lysyl-[protein] + ATP = N(6)-((3R)-3,6-diaminohexanoyl)-L-lysyl-[protein] + AMP + diphosphate + H(+). Functionally, with EpmB is involved in the beta-lysylation step of the post-translational modification of translation elongation factor P (EF-P). Catalyzes the ATP-dependent activation of (R)-beta-lysine produced by EpmB, forming a lysyl-adenylate, from which the beta-lysyl moiety is then transferred to the epsilon-amino group of a conserved specific lysine residue in EF-P. The sequence is that of Elongation factor P--(R)-beta-lysine ligase from Pectobacterium atrosepticum (strain SCRI 1043 / ATCC BAA-672) (Erwinia carotovora subsp. atroseptica).